A 442-amino-acid polypeptide reads, in one-letter code: Glutamyl-tRNA reductase (442 aa).

Substrate-binding positions include 50–53 (TCNR), Ser109, 114–116 (EPQ), and Gln120. The Nucleophile role is filled by Cys51. 189 to 194 (GAGEMA) contacts NADP(+).

It belongs to the glutamyl-tRNA reductase family. In terms of assembly, homodimer.

The enzyme catalyses (S)-4-amino-5-oxopentanoate + tRNA(Glu) + NADP(+) = L-glutamyl-tRNA(Glu) + NADPH + H(+). The protein operates within porphyrin-containing compound metabolism; protoporphyrin-IX biosynthesis; 5-aminolevulinate from L-glutamyl-tRNA(Glu): step 1/2. Catalyzes the NADPH-dependent reduction of glutamyl-tRNA(Glu) to glutamate 1-semialdehyde (GSA). The chain is Glutamyl-tRNA reductase from Nitratidesulfovibrio vulgaris (strain DSM 19637 / Miyazaki F) (Desulfovibrio vulgaris).